The primary structure comprises 334 residues: GTPase Obg (334 aa).

An Obg domain is found at 1–159 (MRFVDEVVIK…KEVRLELNLL (159 aa)). One can recognise an OBG-type G domain in the interval 160 to 331 (ADVALLGLPN…LAKKLNEFLQ (172 aa)). GTP contacts are provided by residues 166–173 (GLPNAGKS), 191–195 (FTTMY), 212–215 (DIPG), 282–285 (NKID), and 312–314 (SAA). S173 and T193 together coordinate Mg(2+).

Belongs to the TRAFAC class OBG-HflX-like GTPase superfamily. OBG GTPase family. Monomer. It depends on Mg(2+) as a cofactor.

The protein resides in the cytoplasm. Its function is as follows. An essential GTPase which binds GTP, GDP and possibly (p)ppGpp with moderate affinity, with high nucleotide exchange rates and a fairly low GTP hydrolysis rate. Plays a role in control of the cell cycle, stress response, ribosome biogenesis and in those bacteria that undergo differentiation, in morphogenesis control. This chain is GTPase Obg, found in Francisella tularensis subsp. tularensis (strain WY96-3418).